We begin with the raw amino-acid sequence, 391 residues long: Terminal nucleotidyltransferase 5C (391 aa).

This sequence belongs to the TENT family. Interacts with BCCIP and PABPC1; the interaction has no effect on TENT5C poly(A) polymerase function. Interacts with PLK4; this interaction leads to the TENT5C recruitment into the centrosome.

It localises to the nucleus. It is found in the cytoplasm. The protein localises to the cytoskeleton. The protein resides in the microtubule organizing center. Its subcellular location is the centrosome. The catalysed reaction is RNA(n) + ATP = RNA(n)-3'-adenine ribonucleotide + diphosphate. Its function is as follows. Catalyzes the transfer of one adenosine molecule from an ATP to an mRNA poly(A) tail bearing a 3'-OH terminal group and enhances mRNA stability and gene expression. Can also elongate RNA oligos ending with uridine molecule, provided that the sequence is adenosine-rich. Mainly targets mRNAs encoding endoplasmic reticulum-targeted protein. In terms of biological role, (Microbial infection) Seems to enhance replication of some viruses, including yellow fever virus, in response to type I interferon. The sequence is that of Terminal nucleotidyltransferase 5C from Homo sapiens (Human).